A 114-amino-acid chain; its full sequence is Large ribosomal subunit protein P2 (114 aa).

The interval 84–114 (TDALQAGSKKGETKEGPKEESDEDMGFGLFD) is disordered. The span at 92 to 102 (KKGETKEGPKE) shows a compositional bias: basic and acidic residues.

This sequence belongs to the eukaryotic ribosomal protein P1/P2 family. As to quaternary structure, P1 and P2 exist as dimers at the large ribosomal subunit. Phosphorylated.

Plays an important role in the elongation step of protein synthesis. This chain is Large ribosomal subunit protein P2 (rpp-2), found in Brugia malayi (Filarial nematode worm).